A 300-amino-acid polypeptide reads, in one-letter code: Acetyl-coenzyme A carboxylase carboxyl transferase subunit beta 2 (300 aa).

A CoA carboxyltransferase N-terminal domain is found at 26–294 (VWIKCPSCRE…ATAHKSEPIV (269 aa)). The Zn(2+) site is built by Cys-30, Cys-33, Cys-49, and Cys-51. The C4-type zinc finger occupies 30–51 (CPSCRELIYHKQLAERMKVCRC).

This sequence belongs to the AccD/PCCB family. In terms of assembly, acetyl-CoA carboxylase is a heterohexamer composed of biotin carboxyl carrier protein (AccB), biotin carboxylase (AccC) and two subunits each of ACCase subunit alpha (AccA) and ACCase subunit beta (AccD). Zn(2+) is required as a cofactor.

The protein localises to the cytoplasm. It carries out the reaction N(6)-carboxybiotinyl-L-lysyl-[protein] + acetyl-CoA = N(6)-biotinyl-L-lysyl-[protein] + malonyl-CoA. Its pathway is lipid metabolism; malonyl-CoA biosynthesis; malonyl-CoA from acetyl-CoA: step 1/1. Its function is as follows. Component of the acetyl coenzyme A carboxylase (ACC) complex. Biotin carboxylase (BC) catalyzes the carboxylation of biotin on its carrier protein (BCCP) and then the CO(2) group is transferred by the transcarboxylase to acetyl-CoA to form malonyl-CoA. In Roseiflexus sp. (strain RS-1), this protein is Acetyl-coenzyme A carboxylase carboxyl transferase subunit beta 2.